The primary structure comprises 199 residues: WASH complex subunit 3 (199 aa).

A coiled-coil region spans residues V47–I76. The segment covering N93 to N120 has biased composition (polar residues). Disordered stretches follow at residues N93 to T136 and P170 to D199. Acidic residues predominate over residues G183–D192.

It belongs to the CCDC53 family. As to quaternary structure, component of the WASH complex.

The sequence is that of WASH complex subunit 3 from Xenopus laevis (African clawed frog).